The primary structure comprises 476 residues: Small ribosomal subunit protein mS29 (476 aa).

The N-terminal 54 residues, Met1–Tyr54, are a transit peptide targeting the mitochondrion. A disordered region spans residues Gly58–Thr97. Polar residues-rich tracts occupy residues Ile65–Gln74 and Pro86–Thr97. Residue Gly200–Ser207 coordinates ATP.

It belongs to the mitochondrion-specific ribosomal protein mS29 family. In terms of assembly, component of the mitochondrial small ribosomal subunit (mt-SSU). Mature yeast 74S mitochondrial ribosomes consist of a small (37S) and a large (54S) subunit. The 37S small subunit contains a 15S ribosomal RNA (15S mt-rRNA) and at least 32 different proteins. The 54S large subunit contains a 21S rRNA (21S mt-rRNA) and at least 45 different proteins.

It is found in the mitochondrion. Its function is as follows. Component of the mitochondrial ribosome (mitoribosome), a dedicated translation machinery responsible for the synthesis of mitochondrial genome-encoded proteins, including at least some of the essential transmembrane subunits of the mitochondrial respiratory chain. The mitoribosomes are attached to the mitochondrial inner membrane and translation products are cotranslationally integrated into the membrane. mS29 binds GTP and is probably an active GTPase. GTP hydrolysis may be linked to subunit association. mS29 also has an extraribosomal function, being required for maintenance of mitochondrial DNA. In Schizosaccharomyces pombe (strain 972 / ATCC 24843) (Fission yeast), this protein is Small ribosomal subunit protein mS29 (rsm23).